The chain runs to 241 residues: Probable GTP-binding protein EngB (241 aa).

An EngB-type G domain is found at 56-240; it reads GPVEIAFAGR…RAAIALLLKE (185 aa). Residues 64 to 71, 91 to 95, 118 to 121, 185 to 188, and 219 to 221 each bind GTP; these read GRSNVGKS, GRTQE, DMPG, TKID, and TSS. Positions 71 and 93 each coordinate Mg(2+).

It belongs to the TRAFAC class TrmE-Era-EngA-EngB-Septin-like GTPase superfamily. EngB GTPase family. It depends on Mg(2+) as a cofactor.

Necessary for normal cell division and for the maintenance of normal septation. The polypeptide is Probable GTP-binding protein EngB (Brucella suis biovar 1 (strain 1330)).